The chain runs to 116 residues: Cocaine- and amphetamine-regulated transcript protein (116 aa).

A signal peptide spans 1–27 (MESSRVRLLPLLGAALLLMLPLLGTRA). Tyrosine 41 is subject to Phosphotyrosine. At serine 48 the chain carries Phosphoserine. 3 disulfide bridges follow: cysteine 82–cysteine 100, cysteine 88–cysteine 108, and cysteine 102–cysteine 115.

Belongs to the CART family. As to expression, hypothalamus. Found in neurons of the ventrolateral part of the arcuate nucleus, in the external zone of the median eminence, and also found in terminals in the periventricular part of the paraventricular nucleus.

It is found in the secreted. Its function is as follows. Satiety factor closely associated with the actions of leptin and neuropeptide Y; this anorectic peptide inhibits both normal and starvation-induced feeding and completely blocks the feeding response induced by neuropeptide Y and regulated by leptin in the hypothalamus. It promotes neuronal development and survival in vitro. The protein is Cocaine- and amphetamine-regulated transcript protein (CARTPT) of Homo sapiens (Human).